The chain runs to 278 residues: HTH-type transcriptional activator RhaS (278 aa).

The HTH araC/xylS-type domain occupies 174-272 (NLLLAWLEDH…NWSPRDIRQG (99 aa)). 2 consecutive DNA-binding regions (H-T-H motif) follow at residues 191 to 212 (DAVA…KQQT) and 239 to 262 (VTDI…RREF).

As to quaternary structure, binds DNA as a dimer.

Its subcellular location is the cytoplasm. Its function is as follows. Activates expression of the rhaBAD and rhaT operons. The protein is HTH-type transcriptional activator RhaS of Shigella sonnei (strain Ss046).